A 1119-amino-acid chain; its full sequence is DISARM protein DrmA (1119 aa).

The disordered stretch occupies residues 73–95; it reads PESGMEEDVEQQRNSELEQEAEE. Positions 813 to 986 constitute a Helicase C-terminal domain; that stretch reads ELSKYIDPYR…ATPYASRARD (174 aa).

This sequence belongs to the helicase family.

The protein localises to the cytoplasm. In terms of biological role, component of antiviral defense system DISARM (defense island system associated with restriction-modification), composed of DrmE, DrmA, DrmB, DrmC and DrmMII. DISARM is probably a multi-gene restriction module, this subunit is probably a helicase. Expression of DISARM in B.subtilis (strain BEST7003) confers resistance to phages Nf, phi29, phi105, phi3T, SPO1, SPR and SPP1. Protection is over 10(7)-fold against phi3T, 10(4)-10(5)-fold against Nf, phi29, phi105 and SPR, 100-fold against SPO1 and 10-fold against SPP1. DISARM does not interfere with phage adsorption, but instead interferes with (phi3T) DNA replication early in its cycle, preventing replication, circularization and lysogeny and probably causes phage DNA degradation (DNA is degraded in SPP1-infected cells). This chain is DISARM protein DrmA, found in Bacillus paralicheniformis (strain ATCC 9945a / NCIMB 11709 / CD-2).